The primary structure comprises 349 residues: Protein AMBP (349 aa).

An N-terminal signal peptide occupies residues 1–19 (MQGLGALFLLLTACLTLKA). The 3-hydroxy-L-kynurenine site is built by cysteine 52 and lysine 110. Cysteines 90 and 187 form a disulfide. Asparagine 114 carries N-linked (GlcNAc...) asparagine glycosylation. The 3-hydroxy-L-kynurenine site is built by lysine 136 and lysine 148. Serine 214 carries O-linked (Xyl...) (chondroitin sulfate) serine glycosylation. Intrachain disulfides connect cysteine 230-cysteine 280, cysteine 239-cysteine 263, cysteine 255-cysteine 276, cysteine 286-cysteine 336, cysteine 295-cysteine 319, and cysteine 311-cysteine 332. 2 BPTI/Kunitz inhibitor domains span residues 230 to 280 (CQLN…LQTC) and 286 to 336 (CNLP…KEYC). Asparagine 233 carries N-linked (GlcNAc...) asparagine glycosylation.

The protein in the N-terminal section; belongs to the calycin superfamily. Lipocalin family. In terms of assembly, monomer. Homodimer. In plasma, it occurs as a monomer or dimer and in covalently-linked complexes with immunoglobulin A (IgA), ALB/albumin and F2/prothrombin. Chromophore-bound alpha-1-microglobulin interacts with the constant region of immunoglobulin A. Chromophore-bound alpha-1-microglobulin interacts with ALB with molar ratio 2:1 and 1:1; this interaction does not prevent fatty acid binding to ALB. Interacts with F2/prothrombin (via N-terminus) with molar ratio 2:1 and 1:1; this interaction does not prevent the activation of prothrombin to thrombin. Interacts with NDUFAB1, a subunit of mitochondrial complex I. Interacts with FN1. I-alpha-I plasma protease inhibitors are assembled from one or two heavy chains (HC) and one light chain, bikunin. Inter-alpha-inhibitor (I-alpha-I) is composed of ITIH1/HC1, ITIH2/HC2 and bikunin, and pre-alpha-inhibitor (P-alpha-I) of ITIH3/HC3 and bikunin. Interacts with TNFAIP6 (via Link domain). As to quaternary structure, monomer. Also occurs as a complex with tryptase in mast cells. The precursor is proteolytically processed into separately functioning proteins. In terms of processing, 3-hydroxykynurenine, an oxidized tryptophan metabolite that is common in biological fluids, reacts with Cys-53, Lys-111, Lys-137, and Lys-149 to form heterogeneous polycyclic chromophores including hydroxanthommatin. The reaction by alpha-1-microglobulin is autocatalytic; the human protein forms chromophore even when expressed in insect and bacterial cells. The chromophore can react with accessible cysteines forming non-reducible thioether cross-links with other molecules of alpha-1-microglobulin or with other proteins such as Ig alpha-1 chain C region 'Cys-352'. Post-translationally, heavy chains are interlinked with bikunin via a chondroitin 4-sulfate bridge to the C-terminal aspartate. Proteolytically cleaved by PRSS3 at Kunitz domain 2. Expressed by the liver and secreted in plasma.

It is found in the secreted. The protein resides in the endoplasmic reticulum. The protein localises to the cytoplasm. Its subcellular location is the cytosol. It localises to the cell membrane. It is found in the nucleus membrane. The protein resides in the mitochondrion inner membrane. The protein localises to the extracellular space. Its subcellular location is the extracellular matrix. In terms of biological role, antioxidant and tissue repair protein with reductase, heme-binding and radical-scavenging activities. Removes and protects against harmful oxidants and repairs macromolecules in intravascular and extravascular spaces and in intracellular compartments. Intravascularly, plays a regulatory role in red cell homeostasis by preventing heme- and reactive oxygen species-induced cell damage. Binds and degrades free heme to protect fetal and adult red blood cells from hemolysis. Reduces extracellular methemoglobin, a Fe3+ (ferric) form of hemoglobin that cannot bind oxygen, back to the Fe2+ (ferrous) form deoxyhemoglobin, which has oxygen-carrying potential. Upon acute inflammation, inhibits oxidation of low-density lipoprotein particles by MPO and limits vascular damage. Extravascularly, protects from oxidation products formed on extracellular matrix structures and cell membranes. Catalyzes the reduction of carbonyl groups on oxidized collagen fibers and preserves cellular and extracellular matrix ultrastructures. Importantly, counteracts the oxidative damage at blood-placenta interface, preventing leakage of free fetal hemoglobin into the maternal circulation. Intracellularly, has a role in maintaining mitochondrial redox homeostasis. Bound to complex I of the respiratory chain of mitochondria, may scavenge free radicals and preserve mitochondrial ATP synthesis. Protects renal tubule epithelial cells from heme-induced oxidative damage to mitochondria. Reduces cytochrome c from Fe3+ (ferric) to the Fe2+ (ferrous) state through formation of superoxide anion radicals in the presence of ascorbate or NADH/NADPH electron donor cofactors, ascorbate being the preferred cofactor. Has a chaperone role in facilitating the correct folding of bikunin in the endoplasmic reticulum compartment. Its function is as follows. Kunitz-type serine protease inhibitor and structural component of extracellular matrix with a role in extracellular space remodeling and cell adhesion. Among others, has antiprotease activity toward kallikrein, a protease involved in airway inflammation; inhibits GZMK/granzyme, a granule-stored serine protease involved in NK and T cell cytotoxic responses; and inhibits PLG/plasmin, a protease required for activation of matrix metalloproteinases. As part of I-alpha-I complex, provides for the heavy chains to be transferred from I-alpha-I complex to hyaluronan in the presence of TNFAIP6, in a dynamic process that releases free bikunin and remodels extracellular matrix proteoglycan structures. Free bikunin, but not its heavy chain-bound form, acts as a potent protease inhibitor in airway secretions. Part of hyaluronan-rich extracellular matrix that surrounds oocyte during cumulus oophorus expansion, an indispensable process for proper ovulation. Also inhibits calcium oxalate crystallization. Functionally, kunitz-type serine protease inhibitor. Has high catalytic efficiency for F10/blood coagulation factor Xa and may act as an anticoagulant by inhibiting prothrombin activation. Inhibits trypsin and mast cell CMA1/chymase and tryptase proteases. The polypeptide is Protein AMBP (Ambp) (Rattus norvegicus (Rat)).